We begin with the raw amino-acid sequence, 264 residues long: tRNA (guanine-N(1)-)-methyltransferase (264 aa).

S-adenosyl-L-methionine contacts are provided by residues glycine 133 and 152–157; that span reads LGDFVM. The span at 240–251 shows a compositional bias: basic and acidic residues; the sequence is QRRPDLWRKARG. The tract at residues 240 to 264 is disordered; that stretch reads QRRPDLWRKARGGEPPADESGEVRR. The segment covering 255-264 has biased composition (acidic residues); it reads PADESGEVRR.

The protein belongs to the RNA methyltransferase TrmD family. Homodimer.

It is found in the cytoplasm. It carries out the reaction guanosine(37) in tRNA + S-adenosyl-L-methionine = N(1)-methylguanosine(37) in tRNA + S-adenosyl-L-homocysteine + H(+). Its function is as follows. Specifically methylates guanosine-37 in various tRNAs. This Sorangium cellulosum (strain So ce56) (Polyangium cellulosum (strain So ce56)) protein is tRNA (guanine-N(1)-)-methyltransferase.